We begin with the raw amino-acid sequence, 853 residues long: Auxin response factor 23 (853 aa).

The segment at 118-141 (PESKQQEDNGSTEEEVPSAPAAGH) is disordered. Residues 149–251 (FCKTLTASDT…ELRVGVRRAM (103 aa)) constitute a DNA-binding region (TF-B3). Disordered stretches follow at residues 422–484 (ESEP…RMQM) and 647–723 (PAKS…QGVS). The segment covering 425–455 (PNGTQRTFQTQENATPKSGFGNSSELESAQK) has biased composition (polar residues). Basic and acidic residues predominate over residues 672 to 686 (EWRRPDVTEVEKCSD). Over residues 706–723 (PSSQQASRNMSCKSQGVS) the composition is skewed to polar residues. The region spanning 725–809 (RSCKKVHKQG…HKIFIYTREE (85 aa)) is the PB1 domain. Residues 815–853 (PGTLNSRSEDSHANSMERGSVGREMRGCLSTSSLNSENC) are disordered. The segment covering 843–853 (LSTSSLNSENC) has biased composition (polar residues).

This sequence belongs to the ARF family. Homodimers and heterodimers. Interacts with CRL1. As to expression, expressed in roots, culms, leaves and young panicles.

It is found in the nucleus. Functionally, auxin response factors (ARFs) are transcriptional factors that bind specifically to the DNA sequence 5'-TGTCTC-3' found in the auxin-responsive promoter elements (AuxREs). This is Auxin response factor 23 (ARF23) from Oryza sativa subsp. japonica (Rice).